A 173-amino-acid polypeptide reads, in one-letter code: Ribosome maturation factor RimM (173 aa).

The PRC barrel domain occupies 95–173 (EGEYYWRQLE…LMVVDWDPDF (79 aa)).

It belongs to the RimM family. Binds ribosomal protein uS19.

The protein localises to the cytoplasm. Its function is as follows. An accessory protein needed during the final step in the assembly of 30S ribosomal subunit, possibly for assembly of the head region. Essential for efficient processing of 16S rRNA. May be needed both before and after RbfA during the maturation of 16S rRNA. It has affinity for free ribosomal 30S subunits but not for 70S ribosomes. The sequence is that of Ribosome maturation factor RimM from Hahella chejuensis (strain KCTC 2396).